The chain runs to 285 residues: Probable endonuclease 4 (285 aa).

Residues H69, H109, E145, D179, H182, H216, D229, H231, and E261 each coordinate Zn(2+).

Belongs to the AP endonuclease 2 family. Zn(2+) is required as a cofactor.

It catalyses the reaction Endonucleolytic cleavage to 5'-phosphooligonucleotide end-products.. Functionally, endonuclease IV plays a role in DNA repair. It cleaves phosphodiester bonds at apurinic or apyrimidinic (AP) sites, generating a 3'-hydroxyl group and a 5'-terminal sugar phosphate. This is Probable endonuclease 4 from Yersinia pseudotuberculosis serotype O:1b (strain IP 31758).